Consider the following 585-residue polypeptide: Arginine--tRNA ligase (585 aa).

Residues 131–141 (ANPTGPMHVGH) carry the 'HIGH' region motif.

Belongs to the class-I aminoacyl-tRNA synthetase family. As to quaternary structure, monomer.

The protein resides in the cytoplasm. It catalyses the reaction tRNA(Arg) + L-arginine + ATP = L-arginyl-tRNA(Arg) + AMP + diphosphate. The polypeptide is Arginine--tRNA ligase (Rhizobium leguminosarum bv. trifolii (strain WSM2304)).